The primary structure comprises 194 residues: Nucleoside triphosphate pyrophosphatase (194 aa).

The Proton acceptor role is filled by Asp71.

Belongs to the Maf family. A divalent metal cation serves as cofactor.

The protein localises to the cytoplasm. It carries out the reaction a ribonucleoside 5'-triphosphate + H2O = a ribonucleoside 5'-phosphate + diphosphate + H(+). It catalyses the reaction a 2'-deoxyribonucleoside 5'-triphosphate + H2O = a 2'-deoxyribonucleoside 5'-phosphate + diphosphate + H(+). Nucleoside triphosphate pyrophosphatase. May have a dual role in cell division arrest and in preventing the incorporation of modified nucleotides into cellular nucleic acids. This chain is Nucleoside triphosphate pyrophosphatase, found in Paramagnetospirillum magneticum (strain ATCC 700264 / AMB-1) (Magnetospirillum magneticum).